A 459-amino-acid polypeptide reads, in one-letter code: Chromosomal replication initiator protein DnaA (459 aa).

Residues 1–74 (MQKIETFWHF…DEMAQDHFNE (74 aa)) form a domain I, interacts with DnaA modulators region. Positions 74 to 122 (ERISFRLELREPAESEAQTVRTSAQKNREDKKPAAEKTQGVTSRKTNPS) are domain II. Positions 87–122 (ESEAQTVRTSAQKNREDKKPAAEKTQGVTSRKTNPS) are disordered. The span at 89 to 98 (EAQTVRTSAQ) shows a compositional bias: polar residues. Residues 99–108 (KNREDKKPAA) show a composition bias toward basic and acidic residues. Positions 112–122 (QGVTSRKTNPS) are enriched in polar residues. Residues 123–339 (QLNASFTFDA…GALKRVLAFS (217 aa)) are domain III, AAA+ region. Residues G167, G169, K170, and T171 each coordinate ATP. The domain IV, binds dsDNA stretch occupies residues 340-459 (RFTGHSISLD…FNALMHILRG (120 aa)).

The protein belongs to the DnaA family. In terms of assembly, oligomerizes as a right-handed, spiral filament on DNA at oriC.

Its subcellular location is the cytoplasm. In terms of biological role, plays an essential role in the initiation and regulation of chromosomal replication. ATP-DnaA binds to the origin of replication (oriC) to initiate formation of the DNA replication initiation complex once per cell cycle. Binds the DnaA box (a 9 base pair repeat at the origin) and separates the double-stranded (ds)DNA. Forms a right-handed helical filament on oriC DNA; dsDNA binds to the exterior of the filament while single-stranded (ss)DNA is stabiized in the filament's interior. The ATP-DnaA-oriC complex binds and stabilizes one strand of the AT-rich DNA unwinding element (DUE), permitting loading of DNA polymerase. After initiation quickly degrades to an ADP-DnaA complex that is not apt for DNA replication. Binds acidic phospholipids. The protein is Chromosomal replication initiator protein DnaA of Nitrosomonas europaea (strain ATCC 19718 / CIP 103999 / KCTC 2705 / NBRC 14298).